Here is a 179-residue protein sequence, read N- to C-terminus: Large ribosomal subunit protein uL6 (179 aa).

The protein belongs to the universal ribosomal protein uL6 family. In terms of assembly, part of the 50S ribosomal subunit.

Its function is as follows. This protein binds to the 23S rRNA, and is important in its secondary structure. It is located near the subunit interface in the base of the L7/L12 stalk, and near the tRNA binding site of the peptidyltransferase center. The protein is Large ribosomal subunit protein uL6 of Alkaliphilus oremlandii (strain OhILAs) (Clostridium oremlandii (strain OhILAs)).